Here is a 162-residue protein sequence, read N- to C-terminus: uncharacterized protein (162 aa).

Belongs to the M.jannaschii MJ0150/MJ0739/MJ0745/MJ1460/MJ1642 family.

This is an uncharacterized protein from Methanocaldococcus jannaschii (strain ATCC 43067 / DSM 2661 / JAL-1 / JCM 10045 / NBRC 100440) (Methanococcus jannaschii).